Reading from the N-terminus, the 156-residue chain is Small ribosomal subunit protein uS7 (156 aa).

The protein belongs to the universal ribosomal protein uS7 family. As to quaternary structure, part of the 30S ribosomal subunit. Contacts proteins S9 and S11.

Functionally, one of the primary rRNA binding proteins, it binds directly to 16S rRNA where it nucleates assembly of the head domain of the 30S subunit. Is located at the subunit interface close to the decoding center, probably blocks exit of the E-site tRNA. The chain is Small ribosomal subunit protein uS7 from Pseudomonas aeruginosa (strain LESB58).